The sequence spans 166 residues: Probable chemoreceptor glutamine deamidase CheD 1 (166 aa).

This sequence belongs to the CheD family.

It catalyses the reaction L-glutaminyl-[protein] + H2O = L-glutamyl-[protein] + NH4(+). Functionally, probably deamidates glutamine residues to glutamate on methyl-accepting chemotaxis receptors (MCPs), playing an important role in chemotaxis. The sequence is that of Probable chemoreceptor glutamine deamidase CheD 1 from Leptospira interrogans serogroup Icterohaemorrhagiae serovar copenhageni (strain Fiocruz L1-130).